A 1538-amino-acid polypeptide reads, in one-letter code: Arf-GAP with Rho-GAP domain, ANK repeat and PH domain-containing protein 3 (1538 aa).

The 65-residue stretch at 4-68 (PQDLDIAVWL…LRLLRAGSAE (65 aa)) folds into the SAM domain. 3 disordered regions span residues 72-97 (DSHL…PVPK), 125-149 (SRNS…SVPN), and 215-242 (ASDR…EDAG). Residues 82–97 (TPSPAPDAQPPKPVPK) show a composition bias toward pro residues. A compositionally biased stretch (basic and acidic residues) spans 216 to 241 (SDRRDGRGVCQERAEHRQDLETREDA). PH domains follow at residues 282 to 374 (VPLL…SCLK) and 389 to 478 (RPLR…EAVT). The Arf-GAP domain occupies 479–606 (ETLSDYEVAE…LFRKPHPRHP (128 aa)). 2 consecutive PH domains span residues 671–785 (ATYR…FSPL) and 795–901 (LLRM…AGGG). The Rho-GAP domain maps to 903 to 1084 (TGLQEQQMSR…ELIDGYISVF (182 aa)). One can recognise a Ras-associating domain in the interval 1113 to 1206 (GDLIMEVYIE…ASLLLRKVSM (94 aa)). A PH 5 domain is found at 1219-1321 (ESPRVGLLRC…WTTSILKAQH (103 aa)). Threonine 1344 carries the post-translational modification Phosphothreonine. Tyrosine 1399 and tyrosine 1404 each carry phosphotyrosine. Residues 1425 to 1439 (WSAKSDPSLTSQRSF) are compositionally biased toward polar residues. Positions 1425–1538 (WSAKSDPSLT…SNPPSSQPLT (114 aa)) are disordered. 2 positions are modified to phosphoserine: serine 1438 and serine 1474. Low complexity-rich tracts occupy residues 1476 to 1486 (EEQLLQELNNL) and 1494 to 1505 (ASCPESSSQPTS). The segment covering 1506-1529 (PQAPSPTSLPTPTPSLPTQPPCTS) has biased composition (pro residues).

As to quaternary structure, interacts (via SAM domain) with INPPL1/SHIP2. In terms of processing, tyrosine phosphorylated at a low basal level. PDGF treatment stimulates phosphorylation. Tyrosine phosphorylation is increased in cells that are in the process of becoming attached to a substrate and that start spreading and flattening.

It localises to the cytoplasm. Its subcellular location is the cell membrane. The protein localises to the cytoskeleton. The protein resides in the cell projection. It is found in the lamellipodium. It localises to the ruffle. In terms of biological role, phosphatidylinositol 3,4,5-trisphosphate-dependent GTPase-activating protein that modulates actin cytoskeleton remodeling by regulating ARF and RHO family members. Is activated by phosphatidylinositol 3,4,5-trisphosphate (PtdIns(3,4,5)P3) binding. Can be activated by phosphatidylinositol 3,4-bisphosphate (PtdIns(3,4,5)P2) binding, albeit with lower efficiency. Acts preferentially on ARF5 and on RHOA. This Mus musculus (Mouse) protein is Arf-GAP with Rho-GAP domain, ANK repeat and PH domain-containing protein 3 (Arap3).